The chain runs to 393 residues: Prokineticin receptor 1 (393 aa).

Residues methionine 1 to isoleucine 63 are Extracellular-facing. Residues asparagine 11, asparagine 14, and asparagine 36 are each glycosylated (N-linked (GlcNAc...) asparagine). The helical transmembrane segment at valine 64–isoleucine 84 threads the bilayer. At alanine 85 to asparagine 98 the chain is on the cytoplasmic side. The chain crosses the membrane as a helical span at residues leucine 99–glutamate 119. The Extracellular segment spans residues methionine 120 to threonine 145. Cysteine 137 and cysteine 217 are joined by a disulfide. The helical transmembrane segment at valine 146–isoleucine 166 threads the bilayer. Residues valine 167–alanine 179 lie on the Cytoplasmic side of the membrane. A helical transmembrane segment spans residues threonine 180–phenylalanine 200. Residues threonine 201 to tyrosine 232 lie on the Extracellular side of the membrane. The helical transmembrane segment at phenylalanine 233 to alanine 253 threads the bilayer. Residues arginine 254–threonine 282 are Cytoplasmic-facing. Residues valine 283–phenylalanine 303 form a helical membrane-spanning segment. Residues alanine 304 to threonine 322 lie on the Extracellular side of the membrane. A helical membrane pass occupies residues alanine 323 to valine 343. Topologically, residues threonine 344–lysine 393 are cytoplasmic.

The protein belongs to the G-protein coupled receptor 1 family.

The protein resides in the cell membrane. Receptor for prokineticin 1. Exclusively coupled to the G(q) subclass of heteromeric G proteins. Activation leads to mobilization of calcium, stimulation of phosphoinositide turnover and activation of p44/p42 mitogen-activated protein kinase. May play a role during early pregnancy. This chain is Prokineticin receptor 1 (PROKR1), found in Bos taurus (Bovine).